The primary structure comprises 519 residues: Importin subunit alpha-5 (519 aa).

In terms of domain architecture, IBB spans 1 to 58; that stretch reads MSLRPSTKTEIRRIRYKVSVDAEEGRRRREDFLVEIRKSKRNENLMKKRRVKVLPPDY. ARM repeat units lie at residues 103 to 143, 146 to 185, 188 to 228, 230 to 269, 272 to 311, 314 to 354, 357 to 396, and 400 to 439; these read SPPT…NIAS, SEHT…NVAG, IQCR…NFFR, KPSP…NLSD, NENI…NIVS, SQQT…NITA, EEQI…NASV, and PNQI…MILI.

The protein belongs to the importin alpha family. As to quaternary structure, forms a complex with importin subunit beta-1.

Its subcellular location is the nucleus envelope. Binds to conventional NLS motifs and mediates nuclear protein import across the nuclear envelope. The polypeptide is Importin subunit alpha-5 (Arabidopsis thaliana (Mouse-ear cress)).